A 466-amino-acid chain; its full sequence is Cysteine--tRNA ligase (466 aa).

Position 29 (Cys29) interacts with Zn(2+). Positions Pro31–Asn41 match the 'HIGH' region motif. Cys209, His234, and Glu238 together coordinate Zn(2+). The 'KMSKS' region motif lies at Lys266 to Ser270. Lys269 lines the ATP pocket. Ser270 carries the post-translational modification Phosphoserine.

It belongs to the class-I aminoacyl-tRNA synthetase family. As to quaternary structure, monomer. Requires Zn(2+) as cofactor.

Its subcellular location is the cytoplasm. It catalyses the reaction tRNA(Cys) + L-cysteine + ATP = L-cysteinyl-tRNA(Cys) + AMP + diphosphate. This chain is Cysteine--tRNA ligase, found in Bacillus velezensis (strain DSM 23117 / BGSC 10A6 / LMG 26770 / FZB42) (Bacillus amyloliquefaciens subsp. plantarum).